The sequence spans 324 residues: Probable pectinesterase A (324 aa).

Positions 1-19 (MHLPSLVLGLLGLGLTASA) are cleaved as a signal peptide. Asn-27 carries N-linked (GlcNAc...) asparagine glycosylation. A substrate-binding site is contributed by Gln-142. Asp-165 functions as the Proton donor in the catalytic mechanism. Asp-186 functions as the Nucleophile in the catalytic mechanism. Residue Asn-191 is glycosylated (N-linked (GlcNAc...) asparagine). Positions 246 and 248 each coordinate substrate.

The protein belongs to the pectinesterase family.

It is found in the secreted. It catalyses the reaction [(1-&gt;4)-alpha-D-galacturonosyl methyl ester](n) + n H2O = [(1-&gt;4)-alpha-D-galacturonosyl](n) + n methanol + n H(+). It functions in the pathway glycan metabolism; pectin degradation; 2-dehydro-3-deoxy-D-gluconate from pectin: step 1/5. In terms of biological role, involved in maceration and soft-rotting of plant tissue. This Neosartorya fischeri (strain ATCC 1020 / DSM 3700 / CBS 544.65 / FGSC A1164 / JCM 1740 / NRRL 181 / WB 181) (Aspergillus fischerianus) protein is Probable pectinesterase A (pmeA).